A 195-amino-acid chain; its full sequence is Imidazoleglycerol-phosphate dehydratase (195 aa).

Belongs to the imidazoleglycerol-phosphate dehydratase family.

Its subcellular location is the cytoplasm. It carries out the reaction D-erythro-1-(imidazol-4-yl)glycerol 3-phosphate = 3-(imidazol-4-yl)-2-oxopropyl phosphate + H2O. It functions in the pathway amino-acid biosynthesis; L-histidine biosynthesis; L-histidine from 5-phospho-alpha-D-ribose 1-diphosphate: step 6/9. The protein is Imidazoleglycerol-phosphate dehydratase of Sphingopyxis alaskensis (strain DSM 13593 / LMG 18877 / RB2256) (Sphingomonas alaskensis).